A 468-amino-acid polypeptide reads, in one-letter code: Chitoporin (468 aa).

The signal sequence occupies residues 1 to 32 (MRTFSGKRSTLALAIAGVTAMSGFMAMPEARA).

Belongs to the outer membrane porin (Opr) (TC 1.B.25) family.

The protein resides in the cell outer membrane. Functionally, involved in the uptake of chitosugars. In Escherichia coli (strain K12), this protein is Chitoporin (chiP).